The chain runs to 506 residues: Maturase K (506 aa).

Belongs to the intron maturase 2 family. MatK subfamily.

The protein localises to the plastid. Its subcellular location is the chloroplast. Functionally, usually encoded in the trnK tRNA gene intron. Probably assists in splicing its own and other chloroplast group II introns. The sequence is that of Maturase K from Trifolium gracilentum (Pinpoint clover).